Here is a 376-residue protein sequence, read N- to C-terminus: Putative F-box protein At1g30930 (376 aa).

The F-box domain maps to methionine 1–leucine 44.

The polypeptide is Putative F-box protein At1g30930 (Arabidopsis thaliana (Mouse-ear cress)).